The sequence spans 165 residues: MVPSRSGQRPDGPRLIYVTRFASHRHGVWQLRGLRGFGHRGPGLGARCASKQAAVEPGARGGERPTGSQAGVTDTPDSAPFQRRSRAPRAREQAAQAGLNQKNAAKEFDFPIPLNEASKLMKERKKASVWSKVQQVISRMIAENESYRRRLQCQRVSSEIRVAAR.

The disordered stretch occupies residues 51-102 (KQAAVEPGARGGERPTGSQAGVTDTPDSAPFQRRSRAPRAREQAAQAGLNQK). Positions 66 to 76 (TGSQAGVTDTP) are enriched in polar residues.

This is an uncharacterized protein from Mus musculus (Mouse).